Reading from the N-terminus, the 368-residue chain is Probable endopolygalacturonase I (368 aa).

Residues 1-18 form the signal peptide; it reads MHSYQLLGLAAVGSLVSA. Residues 19–31 constitute a propeptide that is removed on maturation; the sequence is APAPSRVSEFAKK. Cys-35 and Cys-50 are joined by a disulfide. 3 PbH1 repeats span residues 140–161, 162–192, and 193–214; these read VEDSTFKGINIKNTPVQAISVQ, ATNVHLNDFTIDNSDGDDNGGHNTDGFDISE, and STGVYISGATVKNQDDCIAINS. Asp-207 (proton donor) is an active-site residue. Cys-209 and Cys-225 form a disulfide bridge. His-229 is a catalytic residue. 3 PbH1 repeats span residues 244-265, 273-295, and 307-352; these read VKNVTISDSTVSNSANGVRIKT, VSEITYSNIQLSGITDYGIVIEQ, and STGI…DLSG. An N-linked (GlcNAc...) asparagine glycan is attached at Asn-246. 2 cysteine pairs are disulfide-bonded: Cys-335-Cys-340 and Cys-359-Cys-368.

Belongs to the glycosyl hydrolase 28 family.

Its subcellular location is the secreted. The enzyme catalyses (1,4-alpha-D-galacturonosyl)n+m + H2O = (1,4-alpha-D-galacturonosyl)n + (1,4-alpha-D-galacturonosyl)m.. Involved in maceration and soft-rotting of plant tissue. Hydrolyzes the 1,4-alpha glycosidic bonds of de-esterified pectate in the smooth region of the plant cell wall. The sequence is that of Probable endopolygalacturonase I (pgaI) from Aspergillus niger (strain ATCC MYA-4892 / CBS 513.88 / FGSC A1513).